Here is a 156-residue protein sequence, read N- to C-terminus: Ribosomal RNA large subunit methyltransferase H (156 aa).

The S-adenosyl-L-methionine site is built by leucine 72 and glycine 104.

This sequence belongs to the RNA methyltransferase RlmH family. Homodimer.

The protein localises to the cytoplasm. It carries out the reaction pseudouridine(1915) in 23S rRNA + S-adenosyl-L-methionine = N(3)-methylpseudouridine(1915) in 23S rRNA + S-adenosyl-L-homocysteine + H(+). Specifically methylates the pseudouridine at position 1915 (m3Psi1915) in 23S rRNA. This chain is Ribosomal RNA large subunit methyltransferase H, found in Maricaulis maris (strain MCS10) (Caulobacter maris).